Consider the following 328-residue polypeptide: MKRHLISAADLTRDDAVLILDTAEEMARVADRPIKKLPTLRGRTVVNLFFEDSTRTRISFEAAAKRLSADVINFSAKGSSVSKGESLKDTALTLEAMGADAVVIRHGASGAPYRLATSGWIDGAVVNAGDGTHEHPTQALLDAFTMRRRLVGADTGLGRDLDGRRITIVGDILHSRVARSNVHLLTTLGAHVTLVAPPTLVPVGVEKWPCDVSYSLDDVLAKSDAVMMLRVQRERMNAAYFPTEREYSRRYGLDGERMAKMPEHAIVMHPGPMVRGMEITAEVADSDRCTVVEQVANGVSIRMAVLYLLLGGSDTALSAAPARTEENK.

The carbamoyl phosphate site is built by Arg-55 and Thr-56. Residue Lys-83 participates in L-aspartate binding. Carbamoyl phosphate is bound by residues Arg-105, His-135, and Gln-138. Residues Arg-176 and Arg-230 each contribute to the L-aspartate site. Gly-271 and Pro-272 together coordinate carbamoyl phosphate.

Belongs to the aspartate/ornithine carbamoyltransferase superfamily. ATCase family. In terms of assembly, heterododecamer (2C3:3R2) of six catalytic PyrB chains organized as two trimers (C3), and six regulatory PyrI chains organized as three dimers (R2).

It catalyses the reaction carbamoyl phosphate + L-aspartate = N-carbamoyl-L-aspartate + phosphate + H(+). The protein operates within pyrimidine metabolism; UMP biosynthesis via de novo pathway; (S)-dihydroorotate from bicarbonate: step 2/3. In terms of biological role, catalyzes the condensation of carbamoyl phosphate and aspartate to form carbamoyl aspartate and inorganic phosphate, the committed step in the de novo pyrimidine nucleotide biosynthesis pathway. The polypeptide is Aspartate carbamoyltransferase catalytic subunit (Streptomyces griseus subsp. griseus (strain JCM 4626 / CBS 651.72 / NBRC 13350 / KCC S-0626 / ISP 5235)).